The primary structure comprises 417 residues: Histidine--tRNA ligase (417 aa).

The protein belongs to the class-II aminoacyl-tRNA synthetase family.

It is found in the cytoplasm. It catalyses the reaction tRNA(His) + L-histidine + ATP = L-histidyl-tRNA(His) + AMP + diphosphate + H(+). The protein is Histidine--tRNA ligase of Pyrobaculum neutrophilum (strain DSM 2338 / JCM 9278 / NBRC 100436 / V24Sta) (Thermoproteus neutrophilus).